The chain runs to 219 residues: MAVIQDIIAALWQHDFAALADPHIVSVVYFVMFATLFLENGLLPASFLPGDSLLILAGALIAQGVMDFLPTIAILTAAASLGCWLSYIQGRWLGNTKTVKGWLAQLPAKYHQRATCMFDRHGLLALLAGRFLAFVRTLLPTMAGISGLPNRRFQFFNWLSGLLWVSVVTSFGYALSMIPFVKRHEDQVMTFLMILPIALLTAGLLGTLFVVIKKKYCNA.

Over 1 to 17 (MAVIQDIIAALWQHDFA) the chain is Cytoplasmic. The chain crosses the membrane as a helical span at residues 18–38 (ALADPHIVSVVYFVMFATLFL). Topologically, residues 39 to 67 (ENGLLPASFLPGDSLLILAGALIAQGVMD) are periplasmic. The chain crosses the membrane as a helical span at residues 68 to 88 (FLPTIAILTAAASLGCWLSYI). Residues 89-160 (QGRWLGNTKT…RRFQFFNWLS (72 aa)) lie on the Cytoplasmic side of the membrane. Residues 161–181 (GLLWVSVVTSFGYALSMIPFV) form a helical membrane-spanning segment. Residues 182–191 (KRHEDQVMTF) are Periplasmic-facing. Residues 192–212 (LMILPIALLTAGLLGTLFVVI) form a helical membrane-spanning segment. Residues 213–219 (KKKYCNA) lie on the Cytoplasmic side of the membrane.

The protein belongs to the DedA family.

The protein localises to the cell inner membrane. The sequence is that of Inner membrane protein YghB (yghB) from Escherichia coli O6:H1 (strain CFT073 / ATCC 700928 / UPEC).